Consider the following 408-residue polypeptide: 4-hydroxy-3-methylbut-2-en-1-yl diphosphate synthase (ferredoxin) (408 aa).

Residues 1 to 21 (MQTLPTPTTSSNTANQSTFDT) show a composition bias toward polar residues. A disordered region spans residues 1-26 (MQTLPTPTTSSNTANQSTFDTTIKRR). Cys-317, Cys-320, Cys-351, and Glu-358 together coordinate [4Fe-4S] cluster.

It belongs to the IspG family. The cofactor is [4Fe-4S] cluster.

The catalysed reaction is (2E)-4-hydroxy-3-methylbut-2-enyl diphosphate + 2 oxidized [2Fe-2S]-[ferredoxin] + H2O = 2-C-methyl-D-erythritol 2,4-cyclic diphosphate + 2 reduced [2Fe-2S]-[ferredoxin] + H(+). The protein operates within isoprenoid biosynthesis; isopentenyl diphosphate biosynthesis via DXP pathway; isopentenyl diphosphate from 1-deoxy-D-xylulose 5-phosphate: step 5/6. Functionally, converts 2C-methyl-D-erythritol 2,4-cyclodiphosphate (ME-2,4cPP) into 1-hydroxy-2-methyl-2-(E)-butenyl 4-diphosphate. This is 4-hydroxy-3-methylbut-2-en-1-yl diphosphate synthase (ferredoxin) from Trichormus variabilis (strain ATCC 29413 / PCC 7937) (Anabaena variabilis).